The chain runs to 377 residues: WAT1-related protein At5g13670 (377 aa).

The next 10 helical transmembrane spans lie at 9–29 (FIAI…AKLA), 38–58 (VLVA…ALIL), 64–84 (PKLT…EPVV), 99–119 (TFTS…ACVF), 136–156 (VGTM…GNVI), 187–207 (IMLV…AKIL), 214–234 (LSLT…MGLI), 251–271 (LLAS…IGWA), 279–299 (FVSA…TFVF), and 303–323 (VYVG…LVLW). EamA domains lie at 18-149 (LYAL…MLMT) and 194-322 (FSWS…YLVL).

It belongs to the drug/metabolite transporter (DMT) superfamily. Plant drug/metabolite exporter (P-DME) (TC 2.A.7.4) family.

It localises to the membrane. This is WAT1-related protein At5g13670 from Arabidopsis thaliana (Mouse-ear cress).